The chain runs to 315 residues: O-antigen chain rhamnosyltransferase WbaN (315 aa).

It belongs to the glycosyltransferase 2 family.

The enzyme catalyses alpha-D-galactosyl-di-trans,octa-cis-undecaprenyl diphosphate + dTDP-beta-L-rhamnose = alpha-L-rhamnosyl-(1-&gt;3)-alpha-D-galactosyl-1-diphospho-di-trans,octa-cis-undecaprenol + dTDP + H(+). It participates in bacterial outer membrane biogenesis; LPS O-antigen biosynthesis. Functionally, rhamnosyltransferase involved in the biosynthesis of the repeat unit of the lipopolysaccharide (LPS) O-antigen region. Catalyzes the addition of a rhamnose to the galactosyl-undecaprenyl diphosphate intermediate. This is O-antigen chain rhamnosyltransferase WbaN from Salmonella anatum.